The chain runs to 197 residues: FMN-dependent NADH:quinone oxidoreductase (197 aa).

FMN contacts are provided by residues S10 and S17–S19.

This sequence belongs to the azoreductase type 1 family. In terms of assembly, homodimer. FMN serves as cofactor.

It catalyses the reaction 2 a quinone + NADH + H(+) = 2 a 1,4-benzosemiquinone + NAD(+). The catalysed reaction is N,N-dimethyl-1,4-phenylenediamine + anthranilate + 2 NAD(+) = 2-(4-dimethylaminophenyl)diazenylbenzoate + 2 NADH + 2 H(+). Quinone reductase that provides resistance to thiol-specific stress caused by electrophilic quinones. Functionally, also exhibits azoreductase activity. Catalyzes the reductive cleavage of the azo bond in aromatic azo compounds to the corresponding amines. The sequence is that of FMN-dependent NADH:quinone oxidoreductase from Mycoplasmoides gallisepticum (strain R(low / passage 15 / clone 2)) (Mycoplasma gallisepticum).